The following is a 201-amino-acid chain: MPVPIVIESTGRAERAYDIYSRLLKDRIVLLGTPIDDQVASLICAQLLFLESENPEKEIHMYINSPGGSVTAGMAIYDTMQYINSPVSTLCMGQAASMGALLLAAGAPGLRFSLPHSRIMIHQPSGGFQGQATDIDIQAREVLRLKQSLNAIMSQHTGKPLEQVALDTERDYFMGPEEAQAYGLIDRVLTSRSEATDTISK.

Catalysis depends on Ser97, which acts as the Nucleophile. His122 is an active-site residue.

This sequence belongs to the peptidase S14 family. Fourteen ClpP subunits assemble into 2 heptameric rings which stack back to back to give a disk-like structure with a central cavity, resembling the structure of eukaryotic proteasomes.

It is found in the cytoplasm. The catalysed reaction is Hydrolysis of proteins to small peptides in the presence of ATP and magnesium. alpha-casein is the usual test substrate. In the absence of ATP, only oligopeptides shorter than five residues are hydrolyzed (such as succinyl-Leu-Tyr-|-NHMec, and Leu-Tyr-Leu-|-Tyr-Trp, in which cleavage of the -Tyr-|-Leu- and -Tyr-|-Trp bonds also occurs).. Its function is as follows. Cleaves peptides in various proteins in a process that requires ATP hydrolysis. Has a chymotrypsin-like activity. Plays a major role in the degradation of misfolded proteins. This is ATP-dependent Clp protease proteolytic subunit from Nitratidesulfovibrio vulgaris (strain ATCC 29579 / DSM 644 / CCUG 34227 / NCIMB 8303 / VKM B-1760 / Hildenborough) (Desulfovibrio vulgaris).